The chain runs to 264 residues: MRVVVVTLALLFLTGTQARYFWQHDEPQAPLDRLRDLVDVYLETVKASGKDAIAQFEASAVGKQLDLKLADNLDTLGAAAAKLREDMAPYYKEVREMWLKDTESLRAELTKDLEEVKEKIRPFLDQFSAKWTEELEQYRQRLAPVAEELKELTKQKVELMQQKLTPVAEEARDRLRGHVEELRKNLAPYSDELRQKLSQKLEEIREKGIPQAAEYQAKVVEQLSNLREKMTPLVQDFKERLTPYAENLKTRFISLLDELQKTVA.

The signal sequence occupies residues 1-18 (MRVVVVTLALLFLTGTQA). 2 repeat units span residues 67 to 88 (LKLADNLDTLGAAAAKLREDMA) and 89 to 110 (PYYKEVREMWLKDTESLRAELT). Residues 67–264 (LKLADNLDTL…LLDELQKTVA (198 aa)) form a 10 X approximate tandem repeats region. Residues 111-121 (KDLEEVKEKIR) form a 3; half-length repeat. 5 consecutive repeat copies span residues 122-143 (PFLDQFSAKWTEELEQYRQRLA), 144-165 (PVAEELKELTKQKVELMQQKLT), 166-187 (PVAEEARDRLRGHVEELRKNLA), 188-209 (PYSDELRQKLSQKLEEIREKGI), and 210-231 (PQAAEYQAKVVEQLSNLREKMT). One copy of the 9; half-length repeat lies at 232 to 242 (PLVQDFKERLT). Copy 10 of the repeat occupies 243–264 (PYAENLKTRFISLLDELQKTVA).

The protein belongs to the apolipoprotein A1/A4/E family. Major protein of plasma HDL, also found in chylomicrons.

It localises to the secreted. In terms of biological role, participates in the reverse transport of cholesterol from tissues to the liver for excretion by promoting cholesterol efflux from tissues and by acting as a cofactor for the lecithin cholesterol acyltransferase (LCAT). The polypeptide is Apolipoprotein A-I (APOA1) (Anas platyrhynchos (Mallard)).